The chain runs to 191 residues: Glutathione-dependent formaldehyde-activating enzyme (191 aa).

The region spanning 22–169 is the CENP-V/GFA domain; that stretch reads FAGGTLQCLC…LTELGLTPYD (148 aa). The Zn(2+) site is built by Cys29, Cys31, Cys50, Cys52, Cys55, Cys97, and Cys100.

It belongs to the Gfa family. Requires Zn(2+) as cofactor.

It carries out the reaction S-(hydroxymethyl)glutathione = glutathione + formaldehyde. It functions in the pathway one-carbon metabolism; formaldehyde degradation; formate from formaldehyde (glutathione route): step 1/3. Its function is as follows. Catalyzes the condensation of formaldehyde and glutathione to S-hydroxymethylglutathione. This chain is Glutathione-dependent formaldehyde-activating enzyme, found in Xanthomonas campestris pv. campestris (strain 8004).